The primary structure comprises 426 residues: GTPase HflX (426 aa).

One can recognise a Hflx-type G domain in the interval 198–365 (PTVSLVGYTN…ALTERLSGEV (168 aa)). Residues 204-211 (GYTNAGKS), 229-233 (FATLD), 251-254 (DTVG), 317-320 (NKID), and 343-345 (SAQ) each bind GTP. 2 residues coordinate Mg(2+): Ser-211 and Thr-231.

It belongs to the TRAFAC class OBG-HflX-like GTPase superfamily. HflX GTPase family. Monomer. Associates with the 50S ribosomal subunit. This interaction occurs in the presence of GTP, GDP, ATP or ADP, but not in their absence. It depends on Mg(2+) as a cofactor.

It localises to the cytoplasm. Intrinsic GTPase activity is very slow and can be stimulated by the presence of 50S ribosomal subunits or 70S ribosomes. GTPase activity is inhibited by ATP. Functionally, GTPase that associates with the 50S ribosomal subunit and may have a role during protein synthesis or ribosome biogenesis. In vitro, also exhibits ATPase activity. In Escherichia coli (strain K12), this protein is GTPase HflX.